A 145-amino-acid chain; its full sequence is Transcription antitermination protein NusB (145 aa).

The protein belongs to the NusB family.

Involved in transcription antitermination. Required for transcription of ribosomal RNA (rRNA) genes. Binds specifically to the boxA antiterminator sequence of the ribosomal RNA (rrn) operons. This chain is Transcription antitermination protein NusB, found in Geotalea daltonii (strain DSM 22248 / JCM 15807 / FRC-32) (Geobacter daltonii).